Here is a 244-residue protein sequence, read N- to C-terminus: Transcriptional activator protein anr (244 aa).

21–149 provides a ligand contact to a nucleoside 3',5'-cyclic phosphate; that stretch reads APLCLPLSLT…RLMSREIRDD (129 aa). The HTH crp-type domain maps to 159 to 232; sequence KTADERIATF…GKEVHILDSI (74 aa). A DNA-binding region (H-T-H motif) is located at residues 192-211; the sequence is RNEIGNYLGLAVETVSRVFT.

Functionally, transcriptional activator of anaerobic gene expression. The protein is Transcriptional activator protein anr (anr) of Pseudomonas aeruginosa (strain ATCC 15692 / DSM 22644 / CIP 104116 / JCM 14847 / LMG 12228 / 1C / PRS 101 / PAO1).